The primary structure comprises 100 residues: Small ribosomal subunit protein bS20 (100 aa).

It belongs to the bacterial ribosomal protein bS20 family.

Functionally, binds directly to 16S ribosomal RNA. The sequence is that of Small ribosomal subunit protein bS20 from Prochlorococcus marinus (strain MIT 9211).